An 85-amino-acid polypeptide reads, in one-letter code: Kappa-theraphotoxin-Cg1d (85 aa).

An N-terminal signal peptide occupies residues 1-21 (MKVSVLITLAVLGVMFVWASA). Positions 22-51 (AELEERGSDQRDSPAWLKSMERIFQSEERE) are excised as a propeptide. Disulfide bonds link Cys-52–Cys-66, Cys-59–Cys-71, and Cys-65–Cys-78.

It belongs to the neurotoxin 10 (Hwtx-1) family. 28 (Jztx-11) subfamily. In terms of tissue distribution, expressed by the venom gland.

The protein localises to the secreted. In terms of biological role, probable ion channel inhibitor. In Chilobrachys guangxiensis (Chinese earth tiger tarantula), this protein is Kappa-theraphotoxin-Cg1d.